A 344-amino-acid polypeptide reads, in one-letter code: N-acetyl-gamma-glutamyl-phosphate reductase (344 aa).

Cysteine 149 is an active-site residue.

Belongs to the NAGSA dehydrogenase family. Type 1 subfamily.

Its subcellular location is the cytoplasm. It catalyses the reaction N-acetyl-L-glutamate 5-semialdehyde + phosphate + NADP(+) = N-acetyl-L-glutamyl 5-phosphate + NADPH + H(+). Its pathway is amino-acid biosynthesis; L-arginine biosynthesis; N(2)-acetyl-L-ornithine from L-glutamate: step 3/4. Catalyzes the NADPH-dependent reduction of N-acetyl-5-glutamyl phosphate to yield N-acetyl-L-glutamate 5-semialdehyde. The protein is N-acetyl-gamma-glutamyl-phosphate reductase of Acidithiobacillus ferrooxidans (strain ATCC 23270 / DSM 14882 / CIP 104768 / NCIMB 8455) (Ferrobacillus ferrooxidans (strain ATCC 23270)).